We begin with the raw amino-acid sequence, 426 residues long: 3-isopropylmalate dehydratase large subunit (426 aa).

The [4Fe-4S] cluster site is built by C307, C367, and C370.

Belongs to the aconitase/IPM isomerase family. LeuC type 2 subfamily. As to quaternary structure, heterodimer of LeuC and LeuD. It depends on [4Fe-4S] cluster as a cofactor.

The enzyme catalyses (2R,3S)-3-isopropylmalate = (2S)-2-isopropylmalate. It participates in amino-acid biosynthesis; L-leucine biosynthesis; L-leucine from 3-methyl-2-oxobutanoate: step 2/4. Catalyzes the isomerization between 2-isopropylmalate and 3-isopropylmalate, via the formation of 2-isopropylmaleate. This Aliarcobacter butzleri (strain RM4018) (Arcobacter butzleri) protein is 3-isopropylmalate dehydratase large subunit.